The chain runs to 74 residues: Putative antitoxin VapB48 (74 aa).

Functionally, possibly the antitoxin component of a type II toxin-antitoxin (TA) system. Its cognate toxin is VapC48 (Potential). The sequence is that of Putative antitoxin VapB48 (vapB48) from Mycobacterium tuberculosis (strain CDC 1551 / Oshkosh).